Here is a 338-residue protein sequence, read N- to C-terminus: Ketol-acid reductoisomerase (NADP(+)) (338 aa).

A KARI N-terminal Rossmann domain is found at 1 to 181; the sequence is MKVYYDKDAD…GGTKGGVIET (181 aa). Residues 24–27, Arg-47, and Ser-52 contribute to the NADP(+) site; that span reads YGSQ. Residue His-107 is part of the active site. Gly-133 provides a ligand contact to NADP(+). The region spanning 182 to 327 is the KARI C-terminal knotted domain; that stretch reads NFKEETETDL…GQLRDMMPWI (146 aa). Mg(2+)-binding residues include Asp-190, Glu-194, Glu-226, and Glu-230. Ser-251 contributes to the substrate binding site.

The protein belongs to the ketol-acid reductoisomerase family. The cofactor is Mg(2+).

The enzyme catalyses (2R)-2,3-dihydroxy-3-methylbutanoate + NADP(+) = (2S)-2-acetolactate + NADPH + H(+). The catalysed reaction is (2R,3R)-2,3-dihydroxy-3-methylpentanoate + NADP(+) = (S)-2-ethyl-2-hydroxy-3-oxobutanoate + NADPH + H(+). Its pathway is amino-acid biosynthesis; L-isoleucine biosynthesis; L-isoleucine from 2-oxobutanoate: step 2/4. The protein operates within amino-acid biosynthesis; L-valine biosynthesis; L-valine from pyruvate: step 2/4. In terms of biological role, involved in the biosynthesis of branched-chain amino acids (BCAA). Catalyzes an alkyl-migration followed by a ketol-acid reduction of (S)-2-acetolactate (S2AL) to yield (R)-2,3-dihydroxy-isovalerate. In the isomerase reaction, S2AL is rearranged via a Mg-dependent methyl migration to produce 3-hydroxy-3-methyl-2-ketobutyrate (HMKB). In the reductase reaction, this 2-ketoacid undergoes a metal-dependent reduction by NADPH to yield (R)-2,3-dihydroxy-isovalerate. This chain is Ketol-acid reductoisomerase (NADP(+)), found in Azoarcus sp. (strain BH72).